Consider the following 689-residue polypeptide: Glycine--tRNA ligase beta subunit (689 aa).

Belongs to the class-II aminoacyl-tRNA synthetase family. As to quaternary structure, tetramer of two alpha and two beta subunits.

The protein resides in the cytoplasm. It catalyses the reaction tRNA(Gly) + glycine + ATP = glycyl-tRNA(Gly) + AMP + diphosphate. In Shigella dysenteriae serotype 1 (strain Sd197), this protein is Glycine--tRNA ligase beta subunit.